The sequence spans 88 residues: Small ribosomal subunit protein bS20 (88 aa).

2 disordered regions span residues 1-22 (MPNI…AQNA) and 69-88 (KNAA…GLSA).

This sequence belongs to the bacterial ribosomal protein bS20 family.

Its function is as follows. Binds directly to 16S ribosomal RNA. This is Small ribosomal subunit protein bS20 from Shouchella clausii (strain KSM-K16) (Alkalihalobacillus clausii).